Consider the following 503-residue polypeptide: Probable dolichyl pyrophosphate Man9GlcNAc2 alpha-1,3-glucosyltransferase (503 aa).

Residues 1 to 46 lie on the Cytoplasmic side of the membrane; it reads MKERIKDKAWRPQFIKLNNPDTSKKIVSQKSKKPEIVDLSSPGNND. The helical transmembrane segment at 47-67 threads the bilayer; that stretch reads LVTISILCVLLCFQLAISLNP. At 68 to 151 the chain is on the lumenal side; the sequence is HSGESQPPMY…SRGYESIAHK (84 aa). A helical membrane pass occupies residues 152-172; that stretch reads LFMRLSAIIPFYIFYLPPLIF. Residues 173-181 lie on the Cytoplasmic side of the membrane; sequence YFTRSKKMS. Residues 182–202 form a helical membrane-spanning segment; it reads PILYALALLYPSLLVIDNGHF. Topologically, residues 203 to 211 are lumenal; sequence QYNSISLGL. The helical transmembrane segment at 212–232 threads the bilayer; the sequence is FLATYMFLTKNFTIIGSILFV. The Cytoplasmic segment spans residues 233–239; it reads AALNYKQ. The helical transmembrane segment at 240-257 threads the bilayer; sequence MELYHALPVFVFILARSI. Over 258 to 268 the chain is Lumenal; sequence NKTQLFNSFRR. Residues 269–289 traverse the membrane as a helical segment; sequence ILTIGLFVVGTFLIIWLPFLL. Over 290–332 the chain is Cytoplasmic; it reads TGTAKDVIIRVFPFNRGLYEDKVASFWCAFSFILKRLPLQSVQ. A helical membrane pass occupies residues 333–353; sequence IYISTALVLAGSAPSLLVLFL. The Lumenal portion of the chain corresponds to 354 to 359; it reads RPTEKQ. Residues 360–379 form a helical membrane-spanning segment; the sequence is FRISLTATGLSFFLFSFHVH. Over 380–382 the chain is Cytoplasmic; that stretch reads EKT. A helical transmembrane segment spans residues 383-403; sequence ILLAAVPALLLISEYTSLVIW. Residues 404–420 lie on the Lumenal side of the membrane; it reads FLNITNISIFSLCVKDN. Residues 421-441 traverse the membrane as a helical segment; it reads FALSLSFFFAYFVVSYAYTAP. At 442-443 the chain is on the cytoplasmic side; the sequence is RK. Residues 444–464 traverse the membrane as a helical segment; it reads ISHILTILIGFAICILELYGP. At 465 to 474 the chain is on the lumenal side; sequence SNQRFPHIYQ. Residues 475-495 traverse the membrane as a helical segment; that stretch reads LANAFFSCVHFIYFLLYLSFA. At 496–503 the chain is on the cytoplasmic side; sequence SFEKTKKE.

Belongs to the ALG6/ALG8 glucosyltransferase family.

The protein resides in the endoplasmic reticulum membrane. The enzyme catalyses an alpha-D-Man-(1-&gt;2)-alpha-D-Man-(1-&gt;2)-alpha-D-Man-(1-&gt;3)-[alpha-D-Man-(1-&gt;2)-alpha-D-Man-(1-&gt;3)-[alpha-D-Man-(1-&gt;2)-alpha-D-Man-(1-&gt;6)]-alpha-D-Man-(1-&gt;6)]-beta-D-Man-(1-&gt;4)-beta-D-GlcNAc-(1-&gt;4)-alpha-D-GlcNAc-diphospho-di-trans,poly-cis-dolichol + a di-trans,poly-cis-dolichyl beta-D-glucosyl phosphate = an alpha-D-Glc-(1-&gt;3)-alpha-D-Man-(1-&gt;2)-alpha-D-Man-(1-&gt;2)-alpha-D-Man-(1-&gt;3)-[alpha-D-Man-(1-&gt;2)-alpha-D-Man-(1-&gt;3)-[alpha-D-Man-(1-&gt;2)-alpha-D-Man-(1-&gt;6)]-alpha-D-Man-(1-&gt;6)]-beta-D-Man-(1-&gt;4)-beta-D-GlcNAc-(1-&gt;4)-alpha-D-GlcNAc-diphospho-di-trans,poly-cis-dolichol + a di-trans,poly-cis-dolichyl phosphate + H(+). It participates in protein modification; protein glycosylation. Functionally, adds the first glucose residue to the lipid-linked oligosaccharide precursor for N-linked glycosylation. Transfers glucose from dolichyl phosphate glucose (Dol-P-Glc) onto the lipid-linked oligosaccharide Man(9)GlcNAc(2)-PP-Dol. The chain is Probable dolichyl pyrophosphate Man9GlcNAc2 alpha-1,3-glucosyltransferase from Caenorhabditis elegans.